The chain runs to 313 residues: Cytochrome c biogenesis protein CcsA (313 aa).

Transmembrane regions (helical) follow at residues 9–29, 44–64, 71–91, 111–131, 143–163, 217–237, 244–264, and 278–298; these read ILTH…LITF, GIIV…ISSG, LYES…IPYF, GFAT…VPAL, MILG…LLVI, VISL…VWAN, WNWD…AIYL, and AIVA…VNLL.

The protein belongs to the CcmF/CycK/Ccl1/NrfE/CcsA family. May interact with Ccs1.

Its subcellular location is the plastid. The protein localises to the chloroplast thylakoid membrane. In terms of biological role, required during biogenesis of c-type cytochromes (cytochrome c6 and cytochrome f) at the step of heme attachment. This chain is Cytochrome c biogenesis protein CcsA, found in Solanum bulbocastanum (Wild potato).